The primary structure comprises 230 residues: 8-demethylnovobiocic acid C(8)-methyltransferase (230 aa).

Belongs to the methyltransferase superfamily.

It carries out the reaction 8-desmethylnovobiocic acid + S-adenosyl-L-methionine = novobiocic acid + S-adenosyl-L-homocysteine + H(+). The protein operates within antibiotic biosynthesis; novobiocin biosynthesis. In terms of biological role, C-methyltransferase that methylates 8-demethylnovobiocic acid to produce novobiocic acid in the novobiocin biosynthesis pathway. Novobiocin is an aminocoumarin family antibiotic that targets bacterial DNA gyrases. This Streptomyces niveus (Streptomyces spheroides) protein is 8-demethylnovobiocic acid C(8)-methyltransferase (novO).